The sequence spans 189 residues: Putative manganese efflux pump MntP (189 aa).

6 consecutive transmembrane segments (helical) span residues 3–23, 41–61, 65–85, 106–128, 141–161, and 168–188; these read PVSL…AAIG, IIFG…GQAA, VADW…LHMI, WILA…GLAF, GLAT…LGAV, and MVGG…HLSA.

It belongs to the MntP (TC 9.B.29) family.

It localises to the cell inner membrane. Functionally, probably functions as a manganese efflux pump. In Pseudomonas aeruginosa (strain UCBPP-PA14), this protein is Putative manganese efflux pump MntP.